The sequence spans 360 residues: Phospho-N-acetylmuramoyl-pentapeptide-transferase (360 aa).

The next 10 membrane-spanning stretches (helical) occupy residues Ala-26–Lys-46, Gly-70–Trp-90, Ser-94–Val-114, Trp-132–Gly-152, Val-168–Ser-188, Gly-199–Thr-219, Ala-236–Phe-256, Val-263–Leu-283, Leu-288–Val-308, and Val-338–Lys-358.

Belongs to the glycosyltransferase 4 family. MraY subfamily. Mg(2+) is required as a cofactor.

It localises to the cell inner membrane. It catalyses the reaction UDP-N-acetyl-alpha-D-muramoyl-L-alanyl-gamma-D-glutamyl-meso-2,6-diaminopimeloyl-D-alanyl-D-alanine + di-trans,octa-cis-undecaprenyl phosphate = di-trans,octa-cis-undecaprenyl diphospho-N-acetyl-alpha-D-muramoyl-L-alanyl-D-glutamyl-meso-2,6-diaminopimeloyl-D-alanyl-D-alanine + UMP. Its pathway is cell wall biogenesis; peptidoglycan biosynthesis. Its function is as follows. Catalyzes the initial step of the lipid cycle reactions in the biosynthesis of the cell wall peptidoglycan: transfers peptidoglycan precursor phospho-MurNAc-pentapeptide from UDP-MurNAc-pentapeptide onto the lipid carrier undecaprenyl phosphate, yielding undecaprenyl-pyrophosphoryl-MurNAc-pentapeptide, known as lipid I. The chain is Phospho-N-acetylmuramoyl-pentapeptide-transferase from Vibrio parahaemolyticus serotype O3:K6 (strain RIMD 2210633).